Here is a 483-residue protein sequence, read N- to C-terminus: Nucleolar protein 4 (483 aa).

2 disordered regions span residues 210 to 418 (QQDE…PIPS) and 435 to 483 (SESR…DPQI). A compositionally biased stretch (acidic residues) spans 211–225 (QDEDESSIESDEFDM). Composition is skewed to polar residues over residues 229 to 254 (TRMSAVNSDLSSNLEERMQSPQTVHG), 262 to 271 (AESSNGNETL), and 302 to 317 (QPLNLSDSPSSAQLTS). Composition is skewed to basic and acidic residues over residues 319-330 (FRIDDQGSDGKN) and 340-350 (LKMEREARENG). A compositionally biased stretch (polar residues) spans 351–363 (SKSPAHSYSSYDS). Basic and acidic residues-rich tracts occupy residues 364–374 (GKNESVDRGAE), 391–409 (HEDSEKVNETDGVEAERLK), and 435–451 (SESRNAAKRMRLDKAQD). A compositionally biased stretch (polar residues) spans 467 to 483 (ATYSTATVPGSQEDPQI).

The protein resides in the nucleus. It localises to the nucleolus. This chain is Nucleolar protein 4 (Nol4), found in Mus musculus (Mouse).